The sequence spans 283 residues: Cyclin-C (283 aa).

Residues 46–144 enclose the Cyclin N-terminal domain; that stretch reads NVIQALGEHL…ILECEFYLLE (99 aa). The interval 252 to 283 is disordered; the sequence is TILSKMPKPKPPPNSEGEQGPNGSQNSSYSQS. The segment covering 272 to 283 has biased composition (polar residues); the sequence is PNGSQNSSYSQS. A Phosphoserine modification is found at Ser275.

This sequence belongs to the cyclin family. Cyclin C subfamily. As to quaternary structure, component of the Mediator complex, which is composed of MED1, MED4, MED6, MED7, MED8, MED9, MED10, MED11, MED12, MED13, MED13L, MED14, MED15, MED16, MED17, MED18, MED19, MED20, MED21, MED22, MED23, MED24, MED25, MED26, MED27, MED29, MED30, MED31, CCNC, CDK8 and CDC2L6/CDK11. The MED12, MED13, CCNC and CDK8 subunits form a distinct module termed the CDK8 module. Mediator containing the CDK8 module is less active than Mediator lacking this module in supporting transcriptional activation. Individual preparations of the Mediator complex lacking one or more distinct subunits have been variously termed ARC, CRSP, DRIP, PC2, SMCC and TRAP. The cylin/CDK pair formed by CCNC/CDK8 also associates with the large subunit of RNA polymerase II. In terms of tissue distribution, highest levels in pancreas. High levels in heart, liver, skeletal muscle and kidney. Low levels in brain.

Its subcellular location is the nucleus. Component of the Mediator complex, a coactivator involved in regulated gene transcription of nearly all RNA polymerase II-dependent genes. Mediator functions as a bridge to convey information from gene-specific regulatory proteins to the basal RNA polymerase II transcription machinery. Mediator is recruited to promoters by direct interactions with regulatory proteins and serves as a scaffold for the assembly of a functional preinitiation complex with RNA polymerase II and the general transcription factors. Binds to and activates cyclin-dependent kinase CDK8 that phosphorylates the CTD (C-terminal domain) of the large subunit of RNA polymerase II (RNAp II), which may inhibit the formation of a transcription initiation complex. This is Cyclin-C (CCNC) from Homo sapiens (Human).